The chain runs to 938 residues: Collagen alpha-1(I) chain (938 aa).

The interval 1–938 (GGISVPGPMG…PGPPGPPGPP (938 aa)) is disordered. 11 positions are modified to 4-hydroxyproline: Pro-18, Pro-21, Pro-24, Pro-33, Pro-36, Pro-39, Pro-54, Pro-69, Pro-75, Pro-84, and Pro-90. Residues 26-45 (PQGFQGPPGEPGEPGASGPM) show a composition bias toward low complexity. The segment covering 57–71 (NGDDGEAGKPGRPGE) has biased composition (basic and acidic residues). Lys-93 bears the 5-hydroxylysine; alternate mark. Lys-93 is a glycosylation site (O-linked (Gal...) hydroxylysine; alternate). Ser-99 is subject to Phosphoserine. A compositionally biased stretch (low complexity) spans 107 to 135 (DAGPAGPKGRPGASGPAGARGNDGATGAA). Pro-117, Pro-138, Pro-147, Pro-150, Pro-177, Pro-180, Pro-192, Pro-198, Pro-207, Pro-213, Pro-216, and Pro-231 each carry 4-hydroxyproline. Pro residues predominate over residues 137–149 (PPGPTGPAGPPGF). Positions 183–222 (AGAAGPAGNPGADGQPGAKGANGAPGIAGAPGFPGARGPS) are enriched in low complexity. Lys-234 carries the 5-hydroxylysine modification. 4-hydroxyproline occurs at positions 240, 243, 255, 264, 279, 285, 294, and 300. Residues 289–298 (GERGGPGSRG) show a composition bias toward gly residues. Lys-309 bears the 5-hydroxylysine mark. 4-hydroxyproline is present on residues Pro-314, Pro-323, Pro-329, Pro-335, Pro-344, Pro-347, Pro-356, Pro-365, Pro-371, Pro-383, Pro-392, Pro-401, Pro-404, Pro-422, Pro-439, Pro-445, Pro-451, Pro-458, Pro-464, Pro-476, Pro-485, Pro-497, Pro-503, Pro-509, and Pro-518. Residues 338-364 (KGLTGSPGSPGPDGKTGPPGPAGQDGR) show a composition bias toward low complexity. Over residues 373 to 392 (ARGQAGVMGFPGPKGAAGEP) the composition is skewed to low complexity. The residue at position 530 (Lys-530) is a 5-hydroxylysine. Residues Pro-536, Pro-551, and Pro-557 each carry the 4-hydroxyproline modification. A compositionally biased stretch (low complexity) spans 563-577 (SGPSGPAGPTGARGA). Residue Ser-566 is modified to Phosphoserine. 8 positions are modified to 4-hydroxyproline: Pro-578, Pro-584, Pro-587, Pro-596, Pro-602, Pro-620, Pro-629, and Pro-638. A compositionally biased stretch (low complexity) spans 590-617 (AGFAGPPGADGQPGAKGEPGDAGAKGDA). The span at 619–631 (PPGPAGPTGPPGP) shows a compositional bias: pro residues. Lys-641 carries the 5-hydroxylysine modification. Residues 646–662 (SAGPPGATGFPGAAGRV) are compositionally biased toward low complexity. 2 positions are modified to 4-hydroxyproline: Pro-650 and Pro-656. Pro-664 is subject to 3-hydroxyproline. 4-hydroxyproline is present on residues Pro-665, Pro-674, Pro-677, Pro-693, Pro-703, Pro-712, Pro-730, Pro-739, Pro-742, Pro-748, Pro-763, Pro-769, Pro-775, Pro-784, and Pro-790. Positions 762–772 (PPGPMGPPGLA) are enriched in pro residues. Lys-799 carries the post-translational modification 5-hydroxylysine. Residues 807–822 (PGPPGAPGAPGAPGPV) are compositionally biased toward pro residues. 3 positions are modified to 4-hydroxyproline: Pro-810, Pro-813, and Pro-816. Positions 843–867 (AGPAGARGPAGPQGPRRGFSGLQGP) are enriched in low complexity. 4-hydroxyproline occurs at positions 871, 874, 892, and 907. Over residues 874–907 (PGEQGPSGASGPAGPRGPPGSAGSPGKDGLNGLP) the composition is skewed to low complexity. At Pro-912 the chain carries 3-hydroxyproline. Pro-913 is modified (4-hydroxyproline). Over residues 923–938 (VGPPGPPGPPGPPGPP) the composition is skewed to pro residues. At Pro-925 the chain carries 3-hydroxyproline. Residue Pro-926 is modified to 4-hydroxyproline. 3-hydroxyproline is present on Pro-928. Pro-929 bears the 4-hydroxyproline mark. A 3-hydroxyproline modification is found at Pro-931. A 4-hydroxyproline mark is found at Pro-932, Pro-935, and Pro-938.

This sequence belongs to the fibrillar collagen family. Trimers of one alpha 2(I) and two alpha 1(I) chains. Post-translationally, contains mostly 4-hydroxyproline. Proline residues at the third position of the tripeptide repeating unit (G-X-Y) are hydroxylated in some or all of the chains. In terms of processing, contains 3-hydroxyproline at a few sites. This modification occurs on the first proline residue in the sequence motif Gly-Pro-Hyp, where Hyp is 4-hydroxyproline. Lysine residues at the third position of the tripeptide repeating unit (G-X-Y) are 5-hydroxylated in some or all of the chains. Post-translationally, O-glycosylated on hydroxylated lysine residues. The O-linked glycan consists of a Glc-Gal disaccharide. In terms of tissue distribution, expressed in bones.

The protein localises to the secreted. The protein resides in the extracellular space. Its subcellular location is the extracellular matrix. Functionally, type I collagen is a member of group I collagen (fibrillar forming collagen). The polypeptide is Collagen alpha-1(I) chain (Megalonyx jeffersonii (Jefferson's ground sloth)).